A 264-amino-acid chain; its full sequence is Apolipoprotein A-I (264 aa).

The signal sequence occupies residues 1 to 18; sequence MKAVLLVVAALFLAGSQA. A run of 2 repeats spans residues 67–88 and 89–110. The 10 X approximate tandem repeats stretch occupies residues 67–264; the sequence is LRLSDNWDTL…DQASKQLAAQ (198 aa). Residues 111-121 form a 3; half-length repeat; it reads EDLQDVKHKVQ. 3 repeat units span residues 122–143, 144–165, and 166–187. Residues 188 to 207 form a 7; truncated repeat; that stretch reads PFSEEMRQRLAKRLEELKDS. Residue Met193 is modified to Methionine sulfoxide. Repeat 8 spans residues 208–229; sequence ATLADYHAKASEHLKMLGEKAK. A 9; half-length repeat occupies 230-240; sequence PALEDLRQGLL. The stretch at 241-264 is repeat 10; that stretch reads PVLENLKASILSSIDQASKQLAAQ.

It belongs to the apolipoprotein A1/A4/E family. As to quaternary structure, homodimer. Interacts with APOA1BP and CLU. Component of a sperm activating protein complex (SPAP), consisting of APOA1, an immunoglobulin heavy chain, an immunoglobulin light chain and albumin. Interacts with NDRG1. Interacts with SCGB3A2. Interacts with NAXE and YJEFN3. Post-translationally, glycosylated. Palmitoylated. In terms of processing, phosphorylation sites are present in the extracellular medium.

It localises to the secreted. Functionally, participates in the reverse transport of cholesterol from tissues to the liver for excretion by promoting cholesterol efflux from tissues and by acting as a cofactor for the lecithin cholesterol acyltransferase (LCAT). As part of the SPAP complex, activates spermatozoa motility. This is Apolipoprotein A-I (APOA1) from Cavia aperea (Brazilian guinea pig).